Here is a 567-residue protein sequence, read N- to C-terminus: Urease subunit alpha (567 aa).

In terms of domain architecture, Urease spans Gly129–Phe567. Positions 134, 136, and 217 each coordinate Ni(2+). At Lys217 the chain carries N6-carboxylysine. His219 provides a ligand contact to substrate. Residues His246 and His272 each contribute to the Ni(2+) site. Catalysis depends on His320, which acts as the Proton donor. Asp360 is a Ni(2+) binding site.

This sequence belongs to the metallo-dependent hydrolases superfamily. Urease alpha subunit family. Heterotrimer of UreA (gamma), UreB (beta) and UreC (alpha) subunits. Three heterotrimers associate to form the active enzyme. Ni cation serves as cofactor. In terms of processing, carboxylation allows a single lysine to coordinate two nickel ions.

The protein resides in the cytoplasm. It catalyses the reaction urea + 2 H2O + H(+) = hydrogencarbonate + 2 NH4(+). The protein operates within nitrogen metabolism; urea degradation; CO(2) and NH(3) from urea (urease route): step 1/1. This chain is Urease subunit alpha, found in Delftia acidovorans (strain DSM 14801 / SPH-1).